Reading from the N-terminus, the 250-residue chain is Virulence plasmid protein pGP6-D-related protein (250 aa).

The protein belongs to the UPF0137 (pGP6-D) family.

The sequence is that of Virulence plasmid protein pGP6-D-related protein from Chlamydia pneumoniae (Chlamydophila pneumoniae).